A 125-amino-acid chain; its full sequence is Glycine cleavage system H protein (125 aa).

Residues 19-101 (EVTVGITDHA…YHEGWLVKLK (83 aa)) form the Lipoyl-binding domain. An N6-lipoyllysine modification is found at Lys-60.

This sequence belongs to the GcvH family. The glycine cleavage system is composed of four proteins: P, T, L and H. It depends on (R)-lipoate as a cofactor.

Its function is as follows. The glycine cleavage system catalyzes the degradation of glycine. The H protein shuttles the methylamine group of glycine from the P protein to the T protein. The sequence is that of Glycine cleavage system H protein from Legionella pneumophila (strain Corby).